Consider the following 205-residue polypeptide: Urease accessory protein UreG (205 aa).

11–18 provides a ligand contact to GTP; sequence GPVGSGKT.

Belongs to the SIMIBI class G3E GTPase family. UreG subfamily. Homodimer. UreD, UreF and UreG form a complex that acts as a GTP-hydrolysis-dependent molecular chaperone, activating the urease apoprotein by helping to assemble the nickel containing metallocenter of UreC. The UreE protein probably delivers the nickel.

Its subcellular location is the cytoplasm. Functionally, facilitates the functional incorporation of the urease nickel metallocenter. This process requires GTP hydrolysis, probably effectuated by UreG. This is Urease accessory protein UreG from Prochlorococcus marinus (strain NATL1A).